The following is a 370-amino-acid chain: Anhydro-N-acetylmuramic acid kinase (370 aa).

13–20 (GTSMDGID) serves as a coordination point for ATP.

This sequence belongs to the anhydro-N-acetylmuramic acid kinase family.

It carries out the reaction 1,6-anhydro-N-acetyl-beta-muramate + ATP + H2O = N-acetyl-D-muramate 6-phosphate + ADP + H(+). Its pathway is amino-sugar metabolism; 1,6-anhydro-N-acetylmuramate degradation. It functions in the pathway cell wall biogenesis; peptidoglycan recycling. Functionally, catalyzes the specific phosphorylation of 1,6-anhydro-N-acetylmuramic acid (anhMurNAc) with the simultaneous cleavage of the 1,6-anhydro ring, generating MurNAc-6-P. Is required for the utilization of anhMurNAc either imported from the medium or derived from its own cell wall murein, and thus plays a role in cell wall recycling. In Rhizobium etli (strain ATCC 51251 / DSM 11541 / JCM 21823 / NBRC 15573 / CFN 42), this protein is Anhydro-N-acetylmuramic acid kinase.